Consider the following 186-residue polypeptide: Putative adenylate kinase (186 aa).

Gly-10, Gly-12, Lys-13, Thr-14, and Ser-15 together coordinate ATP. The NMP stretch occupies residues 30–53; the sequence is HLNELIKEEHLYTEVDEKRDSVVA. Positions 108 to 118 are LID; sequence KRGYSEEKVNE. Arg-109 contributes to the ATP binding site.

The protein belongs to the adenylate kinase family. AK6 subfamily. In terms of assembly, interacts with uS11. Not a structural component of 40S pre-ribosomes, but transiently interacts with them by binding to uS11.

It carries out the reaction AMP + ATP = 2 ADP. The catalysed reaction is ATP + H2O = ADP + phosphate + H(+). Functionally, broad-specificity nucleoside monophosphate (NMP) kinase that catalyzes the reversible transfer of the terminal phosphate group between nucleoside triphosphates and monophosphates. Also has ATPase activity. Involved in the late maturation steps of the 30S ribosomal particles, specifically 16S rRNA maturation. While NMP activity is not required for ribosome maturation, ATPase activity is. Associates transiently with small ribosomal subunit protein uS11. ATP hydrolysis breaks the interaction with uS11. May temporarily remove uS11 from the ribosome to enable a conformational change of the ribosomal RNA that is needed for the final maturation step of the small ribosomal subunit. In Methanosarcina acetivorans (strain ATCC 35395 / DSM 2834 / JCM 12185 / C2A), this protein is Putative adenylate kinase.